The following is a 416-amino-acid chain: MDKLLIEGGVRLAGEAAISGAKNAALPILCAALLTREPVTLTNVPQLNDIDTLLNLLGQMGVKVSRDNAAVTLDASAIDNPVAPYEMVKTMRASILVLGPLVARCGEARVSLPGGCAIGARPVDQHIKGLQAMGAQVTVEHGYVHAVVSRLAGARLFTDMVTVTGTENLMMAACLADGETVIENAAREPEVVDLANCLVAMGARISGAGTDVIRIRGVDRLNGATHRIMPDRIETGTYLCAAAATGGEIRLTRTSTAYLDAVVDKLMDAGCDVVTERDAIRLKAPARLTSVNIRTSPYPAFPTDMQAQFMAINAVASGAAMIRETIFENRFMHAVELQRLGADIRIDGNTAVVQGVERLQGATVMATDLRASASLVIAGLVAEGETVIERIYHLDRGYERLEEKLAALGAHVRRIA.

22 to 23 (KN) contacts phosphoenolpyruvate. Residue Arg-92 participates in UDP-N-acetyl-alpha-D-glucosamine binding. Cys-116 functions as the Proton donor in the catalytic mechanism. A 2-(S-cysteinyl)pyruvic acid O-phosphothioketal modification is found at Cys-116. UDP-N-acetyl-alpha-D-glucosamine contacts are provided by residues 121 to 125 (RPVDQ), Asp-304, and Ile-326.

It belongs to the EPSP synthase family. MurA subfamily.

The protein resides in the cytoplasm. It carries out the reaction phosphoenolpyruvate + UDP-N-acetyl-alpha-D-glucosamine = UDP-N-acetyl-3-O-(1-carboxyvinyl)-alpha-D-glucosamine + phosphate. It participates in cell wall biogenesis; peptidoglycan biosynthesis. In terms of biological role, cell wall formation. Adds enolpyruvyl to UDP-N-acetylglucosamine. The chain is UDP-N-acetylglucosamine 1-carboxyvinyltransferase from Aromatoleum aromaticum (strain DSM 19018 / LMG 30748 / EbN1) (Azoarcus sp. (strain EbN1)).